Reading from the N-terminus, the 313-residue chain is Transcription initiation factor IIB 2 (313 aa).

Residues alanine 13 to glutamate 44 form a TFIIB-type zinc finger. Residues cysteine 17, cysteine 20, cysteine 36, and cysteine 39 each coordinate Zn(2+). Tandem repeats lie at residues glutamine 130–leucine 213 and serine 224–lysine 305.

It belongs to the TFIIB family.

Functionally, stabilizes TBP binding to an archaeal box-A promoter. Also responsible for recruiting RNA polymerase II to the pre-initiation complex (DNA-TBP-TFIIB). This Thermoplasma volcanium (strain ATCC 51530 / DSM 4299 / JCM 9571 / NBRC 15438 / GSS1) protein is Transcription initiation factor IIB 2.